Consider the following 136-residue polypeptide: Histone H3.3 (136 aa).

A disordered region spans residues 1 to 42; that stretch reads MARTKQTARKSTGGKAPRKQLASKAARKSAPVSGGVKKPHRY. Lys-5 is subject to N6,N6,N6-trimethyllysine; alternate. Lys-5 bears the N6,N6-dimethyllysine; alternate mark. Residues Lys-5 and Lys-10 each carry the N6-methyllysine; alternate modification. Lys-10 carries the N6-acetyllysine; alternate modification. Ser-11 bears the Phosphoserine mark. The residue at position 15 (Lys-15) is an N6,N6-dimethyllysine; alternate. N6-acetyllysine; alternate is present on residues Lys-15, Lys-19, Lys-24, Lys-28, and Lys-37. 4 positions are modified to N6-methyllysine; alternate: Lys-19, Lys-24, Lys-28, and Lys-37. N6,N6,N6-trimethyllysine; alternate is present on residues Lys-28 and Lys-37. Lys-28 and Lys-37 each carry N6,N6-dimethyllysine; alternate. N6-acetyllysine is present on residues Lys-57 and Lys-65. At Lys-80 the chain carries N6,N6,N6-trimethyllysine; alternate. An N6,N6-dimethyllysine; alternate modification is found at Lys-80. Lys-80 is subject to N6-methyllysine; alternate.

Belongs to the histone H3 family. In terms of assembly, the nucleosome is a histone octamer containing two molecules each of H2A, H2B, H3 and H4 assembled in one H3-H4 heterotetramer and two H2A-H2B heterodimers. The octamer wraps approximately 147 bp of DNA. Phosphorylated to form H3S10ph. H3S10ph promotes subsequent H3K14ac formation and is required for transcriptional activation through TBP recruitment to the promoters. Post-translationally, mono-, di- and trimethylated by the COMPASS complex to form H3K4me1/2/3. H3K4me activates gene expression by regulating transcription elongation and plays a role in telomere length maintenance. H3K4me enrichment correlates with transcription levels, and occurs in a 5' to 3' gradient with H3K4me3 enrichment at the 5'-end of genes, shifting to H3K4me2 and then H3K4me1. Methylated by SET2 to form H3K36me. H3K36me represses gene expression. Methylated by DOT1 to form H3K79me. H3K79me is required for association of SIR proteins with telomeric regions and for telomeric silencing. The COMPASS-mediated formation of H3K4me2/3 and the DOT1-mediated formation of H3K79me require H2BK123ub1. In terms of processing, acetylation of histone H3 leads to transcriptional activation. H3K14ac formation by GCN5 is promoted by H3S10ph. H3K14ac can also be formed by ESA1. H3K56ac formation occurs predominantly in newly synthesized H3 molecules during G1, S and G2/M of the cell cycle and may be involved in DNA repair.

The protein localises to the nucleus. It is found in the chromosome. Core component of nucleosome. Nucleosomes wrap and compact DNA into chromatin, limiting DNA accessibility to the cellular machineries which require DNA as a template. Histones thereby play a central role in transcription regulation, DNA repair, DNA replication and chromosomal stability. DNA accessibility is regulated via a complex set of post-translational modifications of histones, also called histone code, and nucleosome remodeling. The chain is Histone H3.3 (HHT3) from Lodderomyces elongisporus (strain ATCC 11503 / CBS 2605 / JCM 1781 / NBRC 1676 / NRRL YB-4239) (Yeast).